The primary structure comprises 536 residues: L-ornithine N(5)-monooxygenase SIDA (536 aa).

A disordered region spans residues 1 to 25 (MSPHRETTGDESTTTTVPQNGTNGA). Residues 115–123 (EKQTRFAWH) and glutamine 134 each bind FAD. Lysine 139 serves as a coordination point for L-ornithine. Valine 200 contributes to the FAD binding site. Arginine 310 contributes to the NADP(+) binding site. Residues 324 to 327 (NSIF) and asparagine 354 each bind L-ornithine. FAD is bound at residue 515–517 (TLL). Serine 518 provides a ligand contact to L-ornithine.

It belongs to the lysine N(6)-hydroxylase/L-ornithine N(5)-oxygenase family. As to quaternary structure, homotetramer. It depends on FAD as a cofactor.

It carries out the reaction L-ornithine + NADH + O2 = N(5)-hydroxy-L-ornithine + NAD(+) + H2O. The enzyme catalyses L-ornithine + NADPH + O2 = N(5)-hydroxy-L-ornithine + NADP(+) + H2O. It participates in siderophore biosynthesis. L-ornithine N(5)-monooxygenase; part of the gene cluster that mediates the biosynthesis of at least 11 siderophores, including beauverichelin A, dimerumic acid (DA), Na-dimethyl coprogen (NADC), eleutherazine B, ferricrocin (FC), fusarinine A, fusarinine C (FsC), metachelin A, mevalonolactone, rhodotorulic acid (RA) and tenellin. This cocktail of siderophores for iron metabolism is essential for virulence, and more specifically for the fungal virulence in penetrating through the host cuticle. Siderophore synthesis is also involved in conidial germination under iron-deficient conditions. SIDA initiates the biosynthesis of these siderophores with the enzymatic hydroxylation of ornithine. SIDA is indispensable for the production of most siderophores including fusarinine C and ferricrocin but not mevalonolactone and eleutherazine B. However, SIDA mediates the metabolic interplay between synthesis of mevalonolactone and eleutherazine B and other siderophores. In Beauveria bassiana (strain ARSEF 2860) (White muscardine disease fungus), this protein is L-ornithine N(5)-monooxygenase SIDA.